A 465-amino-acid chain; its full sequence is tRNA-2-methylthio-N(6)-dimethylallyladenosine synthase (465 aa).

The 121-residue stretch at 5-125 folds into the MTTase N-terminal domain; it reads RKLHIKSFGC…LPELLEKARR (121 aa). The [4Fe-4S] cluster site is built by Cys-14, Cys-50, Cys-88, Cys-166, Cys-170, and Cys-173. A Radical SAM core domain is found at 152–382; the sequence is RARGVSAFVT…QLQGLIDSQQ (231 aa). The region spanning 387–449 is the TRAM domain; that stretch reads RASIGTTVDV…RYSLIGELVK (63 aa).

The protein belongs to the methylthiotransferase family. MiaB subfamily. Monomer. The cofactor is [4Fe-4S] cluster.

Its subcellular location is the cytoplasm. It catalyses the reaction N(6)-dimethylallyladenosine(37) in tRNA + (sulfur carrier)-SH + AH2 + 2 S-adenosyl-L-methionine = 2-methylsulfanyl-N(6)-dimethylallyladenosine(37) in tRNA + (sulfur carrier)-H + 5'-deoxyadenosine + L-methionine + A + S-adenosyl-L-homocysteine + 2 H(+). Functionally, catalyzes the methylthiolation of N6-(dimethylallyl)adenosine (i(6)A), leading to the formation of 2-methylthio-N6-(dimethylallyl)adenosine (ms(2)i(6)A) at position 37 in tRNAs that read codons beginning with uridine. This Rhodopseudomonas palustris (strain BisA53) protein is tRNA-2-methylthio-N(6)-dimethylallyladenosine synthase.